Reading from the N-terminus, the 489-residue chain is Fumarate reductase (CoM/CoB) subunit B (489 aa).

Residues 2–89 (INVKVLRFEP…GAVIEPVDLP (88 aa)) enclose the 2Fe-2S ferredoxin-type domain. 4 residues coordinate [2Fe-2S] cluster: cysteine 53, cysteine 58, cysteine 61, and cysteine 73. 4Fe-4S ferredoxin-type domains follow at residues 124 to 158 (PEDYQDTKKLRGCIECFSCISSCPVIKESTEYAGP) and 178 to 209 (AAGGVEEGLYCCTTCGKCAEVCPKELNVPGDA). Cysteine 136, cysteine 139, cysteine 142, cysteine 146, cysteine 189, cysteine 192, cysteine 195, and cysteine 199 together coordinate [4Fe-4S] cluster.

In terms of assembly, subunit B of the heterodimeric fumarate reductase of methanogenic Archaea, composed of subunits A (TfrA) and B (TfrB). The cofactor is [2Fe-2S] cluster. It depends on [4Fe-4S] cluster as a cofactor.

It localises to the cytoplasm. The catalysed reaction is coenzyme B + coenzyme M + fumarate = coenzyme M-coenzyme B heterodisulfide + succinate. Its function is as follows. Catalyzes the reduction of fumarate with reduced coenzyme M (CoM-S-H) and coenzyme B (CoB-S-H). In vitro, is able to reduces fumarate with reduced benzyl viologen, oxidize CoM-S-H and CoB-S-H to CoM-S-S-CoB with methylene blue, and reduce CoM-S-S-CoB with reduced benzyl viologen. The enzyme has specificity for the two thiol compounds as the CoB--CoM heterodisulfide reductase. The enzyme is very sensitive to oxygen. The polypeptide is Fumarate reductase (CoM/CoB) subunit B (Methanothermobacter marburgensis (strain ATCC BAA-927 / DSM 2133 / JCM 14651 / NBRC 100331 / OCM 82 / Marburg) (Methanobacterium thermoautotrophicum)).